Here is a 299-residue protein sequence, read N- to C-terminus: Coenzyme PQQ synthesis protein B (299 aa).

Belongs to the PqqB family.

It participates in cofactor biosynthesis; pyrroloquinoline quinone biosynthesis. May be involved in the transport of PQQ or its precursor to the periplasm. The sequence is that of Coenzyme PQQ synthesis protein B from Methylobacterium nodulans (strain LMG 21967 / CNCM I-2342 / ORS 2060).